Consider the following 697-residue polypeptide: Phosphoribosylformylglycinamidine synthase subunit PurL (697 aa).

The active site involves His34. ATP contacts are provided by Tyr37 and Lys76. Glu78 provides a ligand contact to Mg(2+). Substrate is bound by residues 79–82 (SHNH) and Arg101. His80 functions as the Proton acceptor in the catalytic mechanism. Asp102 is a Mg(2+) binding site. Gln224 is a substrate binding site. Asp250 lines the Mg(2+) pocket. 294-296 (ETQ) provides a ligand contact to substrate. 2 residues coordinate ATP: Asp472 and Gly509. A substrate-binding site is contributed by Ser512.

It belongs to the FGAMS family. As to quaternary structure, monomer. Part of the FGAM synthase complex composed of 1 PurL, 1 PurQ and 2 PurS subunits.

The protein resides in the cytoplasm. The catalysed reaction is N(2)-formyl-N(1)-(5-phospho-beta-D-ribosyl)glycinamide + L-glutamine + ATP + H2O = 2-formamido-N(1)-(5-O-phospho-beta-D-ribosyl)acetamidine + L-glutamate + ADP + phosphate + H(+). The protein operates within purine metabolism; IMP biosynthesis via de novo pathway; 5-amino-1-(5-phospho-D-ribosyl)imidazole from N(2)-formyl-N(1)-(5-phospho-D-ribosyl)glycinamide: step 1/2. In terms of biological role, part of the phosphoribosylformylglycinamidine synthase complex involved in the purines biosynthetic pathway. Catalyzes the ATP-dependent conversion of formylglycinamide ribonucleotide (FGAR) and glutamine to yield formylglycinamidine ribonucleotide (FGAM) and glutamate. The FGAM synthase complex is composed of three subunits. PurQ produces an ammonia molecule by converting glutamine to glutamate. PurL transfers the ammonia molecule to FGAR to form FGAM in an ATP-dependent manner. PurS interacts with PurQ and PurL and is thought to assist in the transfer of the ammonia molecule from PurQ to PurL. This chain is Phosphoribosylformylglycinamidine synthase subunit PurL, found in Pyrobaculum aerophilum (strain ATCC 51768 / DSM 7523 / JCM 9630 / CIP 104966 / NBRC 100827 / IM2).